The primary structure comprises 345 residues: NADH-ubiquinone oxidoreductase chain 2 (345 aa).

Helical transmembrane passes span 1-21, 26-46, 60-80, 96-115, 122-144, 148-170, 201-223, 242-262, 274-294, and 323-343; these read MNPL…ILTT, WVSA…IISM, FLIQ…NAHL, IALT…HFWL, VPIL…LLIM, LIPT…LGGL, TLLN…HLTM, SLFL…GFIP, NLTP…MFYL, and TSTL…TPTL.

The protein belongs to the complex I subunit 2 family.

Its subcellular location is the mitochondrion inner membrane. It carries out the reaction a ubiquinone + NADH + 5 H(+)(in) = a ubiquinol + NAD(+) + 4 H(+)(out). Functionally, core subunit of the mitochondrial membrane respiratory chain NADH dehydrogenase (Complex I) that is believed to belong to the minimal assembly required for catalysis. Complex I functions in the transfer of electrons from NADH to the respiratory chain. The immediate electron acceptor for the enzyme is believed to be ubiquinone. The polypeptide is NADH-ubiquinone oxidoreductase chain 2 (MT-ND2) (Varanus nebulosus (Clouded monitor)).